The sequence spans 1062 residues: Valine--tRNA ligase, mitochondrial (1062 aa).

The transit peptide at 1–15 directs the protein to the mitochondrion; it reads MPHLPLASFRPPLRG. A disordered region spans residues 1-73; it reads MPHLPLASFR…AKGKPPAEST (73 aa). A compositionally biased stretch (basic and acidic residues) spans 42 to 56; sequence RNREAKQKRLREKQA. The short motif at 146-156 is the 'HIGH' region element; that stretch reads PNVTGSLHIGH. The short motif at 659–663 is the 'KMSKS' region element; sequence KMSKS. Position 662 (Lys-662) interacts with ATP.

Belongs to the class-I aminoacyl-tRNA synthetase family.

The protein localises to the mitochondrion. It carries out the reaction tRNA(Val) + L-valine + ATP = L-valyl-tRNA(Val) + AMP + diphosphate. Its function is as follows. Catalyzes the attachment of valine to tRNA(Val) in a two-step reaction: valine is first activated by ATP to form Val-AMP and then transferred to the acceptor end of tRNA(Val). This Sus scrofa (Pig) protein is Valine--tRNA ligase, mitochondrial (VARS2).